The chain runs to 249 residues: Proteasome activator complex subunit 1 (249 aa).

The segment at 60–102 (PLDIPVPDPVKEKEKEERKKQQEKEEKDEKKKGDEDDKGPPCG) is disordered. Residues 68-98 (PVKEKEKEERKKQQEKEEKDEKKKGDEDDKG) show a composition bias toward basic and acidic residues.

Belongs to the PA28 family. Heterodimer of PSME1 and PSME2, which forms a hexameric ring. PSME1 can form homoheptamers.

Its function is as follows. Implicated in immunoproteasome assembly and required for efficient antigen processing. The PA28 activator complex enhances the generation of class I binding peptides by altering the cleavage pattern of the proteasome. This chain is Proteasome activator complex subunit 1 (Psme1), found in Rattus norvegicus (Rat).